Reading from the N-terminus, the 213-residue chain is Orotate phosphoribosyltransferase (213 aa).

Position 26 (lysine 26) interacts with 5-phospho-alpha-D-ribose 1-diphosphate. 34–35 provides a ligand contact to orotate; it reads FF. 5-phospho-alpha-D-ribose 1-diphosphate contacts are provided by residues 72–73, arginine 99, lysine 100, lysine 103, histidine 105, and 124–132; these read YK and DDVITAGTA. Orotate is bound by residues threonine 128 and arginine 156.

It belongs to the purine/pyrimidine phosphoribosyltransferase family. PyrE subfamily. In terms of assembly, homodimer. It depends on Mg(2+) as a cofactor.

It carries out the reaction orotidine 5'-phosphate + diphosphate = orotate + 5-phospho-alpha-D-ribose 1-diphosphate. Its pathway is pyrimidine metabolism; UMP biosynthesis via de novo pathway; UMP from orotate: step 1/2. Functionally, catalyzes the transfer of a ribosyl phosphate group from 5-phosphoribose 1-diphosphate to orotate, leading to the formation of orotidine monophosphate (OMP). The polypeptide is Orotate phosphoribosyltransferase (Haemophilus ducreyi (strain 35000HP / ATCC 700724)).